Reading from the N-terminus, the 198-residue chain is Holliday junction branch migration complex subunit RuvA (198 aa).

The interval Met-1–His-63 is domain I. Residues Thr-64–Lys-142 are domain II. A flexible linker region spans residues Ala-143 to Lys-147. Residues Ala-148 to Gly-198 are domain III.

Belongs to the RuvA family. As to quaternary structure, homotetramer. Forms an RuvA(8)-RuvB(12)-Holliday junction (HJ) complex. HJ DNA is sandwiched between 2 RuvA tetramers; dsDNA enters through RuvA and exits via RuvB. An RuvB hexamer assembles on each DNA strand where it exits the tetramer. Each RuvB hexamer is contacted by two RuvA subunits (via domain III) on 2 adjacent RuvB subunits; this complex drives branch migration. In the full resolvosome a probable DNA-RuvA(4)-RuvB(12)-RuvC(2) complex forms which resolves the HJ.

It is found in the cytoplasm. In terms of biological role, the RuvA-RuvB-RuvC complex processes Holliday junction (HJ) DNA during genetic recombination and DNA repair, while the RuvA-RuvB complex plays an important role in the rescue of blocked DNA replication forks via replication fork reversal (RFR). RuvA specifically binds to HJ cruciform DNA, conferring on it an open structure. The RuvB hexamer acts as an ATP-dependent pump, pulling dsDNA into and through the RuvAB complex. HJ branch migration allows RuvC to scan DNA until it finds its consensus sequence, where it cleaves and resolves the cruciform DNA. This is Holliday junction branch migration complex subunit RuvA from Streptococcus pyogenes serotype M1.